The following is a 449-amino-acid chain: Probable glycine dehydrogenase (decarboxylating) subunit 1 (449 aa).

It belongs to the GcvP family. N-terminal subunit subfamily. As to quaternary structure, the glycine cleavage system is composed of four proteins: P, T, L and H. In this organism, the P 'protein' is a heterodimer of two subunits.

It carries out the reaction N(6)-[(R)-lipoyl]-L-lysyl-[glycine-cleavage complex H protein] + glycine + H(+) = N(6)-[(R)-S(8)-aminomethyldihydrolipoyl]-L-lysyl-[glycine-cleavage complex H protein] + CO2. In terms of biological role, the glycine cleavage system catalyzes the degradation of glycine. The P protein binds the alpha-amino group of glycine through its pyridoxal phosphate cofactor; CO(2) is released and the remaining methylamine moiety is then transferred to the lipoamide cofactor of the H protein. The chain is Probable glycine dehydrogenase (decarboxylating) subunit 1 from Sulfurisphaera tokodaii (strain DSM 16993 / JCM 10545 / NBRC 100140 / 7) (Sulfolobus tokodaii).